The primary structure comprises 209 residues: Uracil phosphoribosyltransferase (209 aa).

5-phospho-alpha-D-ribose 1-diphosphate is bound by residues arginine 79, arginine 104, and 131–139 (DPMLATGGS). Uracil-binding positions include isoleucine 194 and 199-201 (GDA). Position 200 (aspartate 200) interacts with 5-phospho-alpha-D-ribose 1-diphosphate.

Belongs to the UPRTase family. Mg(2+) serves as cofactor.

It catalyses the reaction UMP + diphosphate = 5-phospho-alpha-D-ribose 1-diphosphate + uracil. The protein operates within pyrimidine metabolism; UMP biosynthesis via salvage pathway; UMP from uracil: step 1/1. Its activity is regulated as follows. Allosterically activated by GTP. Catalyzes the conversion of uracil and 5-phospho-alpha-D-ribose 1-diphosphate (PRPP) to UMP and diphosphate. The protein is Uracil phosphoribosyltransferase of Geobacillus sp. (strain WCH70).